We begin with the raw amino-acid sequence, 899 residues long: CNK3/IPCEF1 fusion protein (899 aa).

One can recognise an SAM domain in the interval Trp-7–Leu-72. A CRIC domain is found at Asn-80 to Ala-174. The PDZ domain occupies Glu-211 to Pro-293. Disordered stretches follow at residues Trp-309 to Leu-334 and Pro-347 to Gln-390. The region spanning Thr-332–Ala-457 is the DUF1170 domain. Ser-383 carries the phosphoserine modification. One can recognise a PH domain in the interval His-503 to Ile-602. 3 disordered regions span residues Glu-605–Val-687, Leu-735–Ser-770, and Gln-868–Ile-899. The segment covering Cys-613–Ile-624 has biased composition (acidic residues). A compositionally biased stretch (low complexity) spans Ala-634–Leu-662. Positions Glu-663–Leu-676 are enriched in polar residues. Positions Leu-735–Ser-745 are enriched in low complexity. The segment covering Ile-761–Ser-770 has biased composition (basic and acidic residues). Positions Lys-851–Ile-899 are required for interaction with CYTH2. A Phosphoserine modification is found at Ser-873. Residues Ser-889–Ile-899 show a composition bias toward polar residues.

Belongs to the CNKSR family.

Required for hepatocyte growth factor (HGF)-dependent activation of Arf6 and HGF-stimulated cell migration. This Homo sapiens (Human) protein is CNK3/IPCEF1 fusion protein (CNK3/IPCEF1).